A 766-amino-acid polypeptide reads, in one-letter code: Darlin (766 aa).

ARM repeat units follow at residues 82-119, 167-208, 423-464, and 465-537; these read QLFE…NLTY, DFIQ…NLVD, EPNC…NLTL, and PTIN…ASMD. The segment at 561–585 is disordered; that stretch reads EEKEKTIEKTDEKTDEKTNEKKQSK. One copy of the ARM 5 repeat lies at 610 to 649; sequence HQEKMKQLIEESVEPFFSLLQSPFPILQVEGAKGLVLLIK.

It belongs to the RAP1GDS1 family. As to quaternary structure, binds to small GTPases racE, racC but not rab21. Binds preferentially to GDP-bound racE.

Functionally, part of a signaling pathway that initiates the aggregation and leads to the formation of aggregation centers or streams. Not essential for cytokinesis, pinocytosis or phagocytosis. Not essential for development, except in starvation-induced aggregation. The polypeptide is Darlin (darA) (Dictyostelium discoideum (Social amoeba)).